The primary structure comprises 221 residues: Ribosome maturation factor RimM (221 aa).

A disordered region spans residues 1–23 (MTERKQGAAAPRPLNRPQGESPK). The PRC barrel domain occupies 144–221 (ENEFYWVDLI…RIVVDWGLDY (78 aa)).

It belongs to the RimM family. As to quaternary structure, binds ribosomal protein uS19.

The protein localises to the cytoplasm. Its function is as follows. An accessory protein needed during the final step in the assembly of 30S ribosomal subunit, possibly for assembly of the head region. Essential for efficient processing of 16S rRNA. May be needed both before and after RbfA during the maturation of 16S rRNA. It has affinity for free ribosomal 30S subunits but not for 70S ribosomes. The polypeptide is Ribosome maturation factor RimM (Cupriavidus pinatubonensis (strain JMP 134 / LMG 1197) (Cupriavidus necator (strain JMP 134))).